Here is a 215-residue protein sequence, read N- to C-terminus: Protein Syd (215 aa).

The protein belongs to the Syd family.

It is found in the cell inner membrane. Its function is as follows. Interacts with the SecY protein in vivo. May bind preferentially to an uncomplexed state of SecY, thus functioning either as a chelating agent for excess SecY in the cell or as a regulatory factor that negatively controls the translocase function. The chain is Protein Syd from Shewanella piezotolerans (strain WP3 / JCM 13877).